A 585-amino-acid polypeptide reads, in one-letter code: Arginine--tRNA ligase (585 aa).

A 'HIGH' region motif is present at residues 131–141 (ANPTGPMHVGH).

It belongs to the class-I aminoacyl-tRNA synthetase family. Monomer.

It is found in the cytoplasm. The enzyme catalyses tRNA(Arg) + L-arginine + ATP = L-arginyl-tRNA(Arg) + AMP + diphosphate. This chain is Arginine--tRNA ligase, found in Bartonella tribocorum (strain CIP 105476 / IBS 506).